We begin with the raw amino-acid sequence, 852 residues long: DNA polymerase kappa (852 aa).

Residues 102 to 357 (IVHVDMDAFY…LPIRKVSGIG (256 aa)) form the UmuC domain. Mg(2+) is bound by residues Asp106 and Asp197. Residues 252-273 (FEDSPPDLQPQGSPFQLNSEEQ) form a disordered region. The segment covering 261 to 273 (PQGSPFQLNSEEQ) has biased composition (polar residues). 2 UBZ4-type zinc fingers span residues 619-649 (TFIC…DGPS) and 761-791 (ALVC…NKGI). Residues Cys622, Cys625, His640, Cys644, Cys764, Cys767, His782, and Cys786 each contribute to the Zn(2+) site. The interval 798–852 (SEGNSVKQPKESSRSTDRLQKASGRTKRPGTKTKSSTLKKTKPRDPRHTLDGFFK) is disordered. The segment covering 805–817 (QPKESSRSTDRLQ) has biased composition (basic and acidic residues). Residues 821 to 839 (GRTKRPGTKTKSSTLKKTK) show a composition bias toward basic residues. Basic and acidic residues predominate over residues 840-852 (PRDPRHTLDGFFK).

The protein belongs to the DNA polymerase type-Y family. As to quaternary structure, interacts with PCNA. Interacts with REV1. It depends on Mg(2+) as a cofactor. Mn(2+) serves as cofactor. In terms of tissue distribution, detected at low levels in heart, brain, lung, liver, kidney and testis.

It localises to the nucleus. The enzyme catalyses DNA(n) + a 2'-deoxyribonucleoside 5'-triphosphate = DNA(n+1) + diphosphate. Its function is as follows. DNA polymerase specifically involved in DNA repair. Plays an important role in translesion synthesis, where the normal high-fidelity DNA polymerases cannot proceed and DNA synthesis stalls. Depending on the context, it inserts the correct base, but causes frequent base transitions, transversions and frameshifts. Lacks 3'-5' proofreading exonuclease activity. Forms a Schiff base with 5'-deoxyribose phosphate at abasic sites, but does not have lyase activity. The chain is DNA polymerase kappa (Polk) from Mus musculus (Mouse).